A 222-amino-acid chain; its full sequence is 7-cyano-7-deazaguanine synthase (222 aa).

11-21 (FSGGQDSTTCL) contacts ATP. Residues Cys187, Cys195, Cys198, and Cys201 each contribute to the Zn(2+) site.

The protein belongs to the QueC family. Zn(2+) serves as cofactor.

The enzyme catalyses 7-carboxy-7-deazaguanine + NH4(+) + ATP = 7-cyano-7-deazaguanine + ADP + phosphate + H2O + H(+). The protein operates within purine metabolism; 7-cyano-7-deazaguanine biosynthesis. In terms of biological role, catalyzes the ATP-dependent conversion of 7-carboxy-7-deazaguanine (CDG) to 7-cyano-7-deazaguanine (preQ(0)). The polypeptide is 7-cyano-7-deazaguanine synthase (Actinobacillus pleuropneumoniae serotype 3 (strain JL03)).